The chain runs to 327 residues: Fructose import binding protein FruE (327 aa).

The signal sequence occupies residues 1 to 22 (MKNWKKAIALVASAAALVSVAA). Cys23 carries the N-palmitoyl cysteine lipid modification. Cys23 carries the S-diacylglycerol cysteine lipid modification.

The protein belongs to the bacterial solute-binding protein 2 family. In terms of assembly, the complex is composed of an ATP-binding protein (FruK), two transmembrane proteins (FruF and FruG) and a solute-binding protein (FruE).

It localises to the cell membrane. Part of the high-affinity ABC transporter complex FruEKFG involved in fructose uptake. Can also transport ribose and xylose, with lower affinity. Binds fructose, ribose and xylose, with fructose as the preferred substrate. In Bifidobacterium longum (strain NCC 2705), this protein is Fructose import binding protein FruE.